We begin with the raw amino-acid sequence, 154 residues long: Probable archaeosortase D (154 aa).

The next 4 helical transmembrane spans lie at 6–26 (AIYI…LKML), 57–77 (IIEI…LGYI), 91–111 (YSVF…ILII), and 125–145 (VISF…IYLL). C64 functions as the Acyl-thioester intermediate in the catalytic mechanism. The active-site Proton donor is the R106.

The protein belongs to the exosortase/archaeosortase family. Archaeosortase D subfamily.

Its subcellular location is the cell membrane. Functionally, transpeptidase that recognizes and modifies its substrate by proteolytic cleavage of a sorting signal. Following cleavage, a covalent intermediate is formed via a thioester bond between the archaeosortase and its substrate, which is then transferred and covalently attached to the cell membrane. The sequence is that of Probable archaeosortase D from Methanocaldococcus jannaschii (strain ATCC 43067 / DSM 2661 / JAL-1 / JCM 10045 / NBRC 100440) (Methanococcus jannaschii).